The sequence spans 202 residues: Ribonuclease HII (202 aa).

The RNase H type-2 domain maps to 13–202 (KIEAGLDEAG…HFKPKQLDLF (190 aa)). A divalent metal cation-binding residues include Asp-19, Glu-20, and Asp-112.

The protein belongs to the RNase HII family. Mn(2+) serves as cofactor. It depends on Mg(2+) as a cofactor.

The protein resides in the cytoplasm. It catalyses the reaction Endonucleolytic cleavage to 5'-phosphomonoester.. Functionally, endonuclease that specifically degrades the RNA of RNA-DNA hybrids. This is Ribonuclease HII from Cytophaga hutchinsonii (strain ATCC 33406 / DSM 1761 / CIP 103989 / NBRC 15051 / NCIMB 9469 / D465).